The following is a 93-amino-acid chain: Regulatory protein RepI (93 aa).

In terms of biological role, this protein is involved in regulating the plasmid copy-number. Increasing the level of this protein results in a higher plasmid copy-number. This Escherichia coli protein is Regulatory protein RepI (repI).